Here is a 257-residue protein sequence, read N- to C-terminus: MPKIGIIGGSGVYGIFEPKETVKVHTPYGRPSAPVEIGEIEGVEVAFIPRHGKYHEFPPHEVPYRANIWALHELGVERVIAVNAVGSLKEEYKPGDIVIIDQFIDFTKKREYTFYNGPRVAHISMADPFCPELRRIFIETAKELNLPVHEKGTYICIEGPRFSTRAESRMFRQFADVIGMTLVPEVNLARELGMCYVNISTVTDYDVWAEKPVDAQEVLRVMKENEEKVQKLLKRAIPKIPEERKCGCADVLKTMFV.

Residues serine 10 and 50–51 (RH) each bind phosphate. Cysteine 130 and cysteine 195 are disulfide-bonded. Methionine 180 is a substrate binding site. Position 181 (threonine 181) interacts with phosphate. Residue 204–206 (DYD) participates in substrate binding. A disulfide bridge connects residues cysteine 246 and cysteine 248.

This sequence belongs to the PNP/MTAP phosphorylase family. MTAP subfamily. In terms of assembly, homohexamer. Dimer of a homotrimer.

The catalysed reaction is S-methyl-5'-thioadenosine + phosphate = 5-(methylsulfanyl)-alpha-D-ribose 1-phosphate + adenine. It participates in amino-acid biosynthesis; L-methionine biosynthesis via salvage pathway; S-methyl-5-thio-alpha-D-ribose 1-phosphate from S-methyl-5'-thioadenosine (phosphorylase route): step 1/1. In terms of biological role, catalyzes the reversible phosphorylation of S-methyl-5'-thioadenosine (MTA) to adenine and 5-methylthioribose-1-phosphate. Involved in the breakdown of MTA, a major by-product of polyamine biosynthesis. Responsible for the first step in the methionine salvage pathway after MTA has been generated from S-adenosylmethionine. Has broad substrate specificity with 6-aminopurine nucleosides as preferred substrates. In Pyrococcus furiosus (strain ATCC 43587 / DSM 3638 / JCM 8422 / Vc1), this protein is S-methyl-5'-thioadenosine phosphorylase.